Reading from the N-terminus, the 307-residue chain is uncharacterized protein (307 aa).

Transmembrane regions (helical) follow at residues 1 to 21 (MLILISFTALILFFLAGMNML), 52 to 72 (IVFTGILQSSSAFMVIVIGFV), 99 to 119 (FIAIKMDIVIWVLLIGGLLFF), 133 to 153 (FLGLGIIFFCISGFSHLAGPL), 174 to 194 (LLIGMVLTAIIHSSSVCIGIL), 208 to 228 (AMSVVLGSNIGTCITAVMAAV), 242 to 262 (VVFNVLGVALVLPFLTAATGF), and 277 to 297 (FSLLFNVVTALLFLPLTNLFY).

The protein resides in the cell membrane. This is an uncharacterized protein from Bacillus subtilis (strain 168).